Here is a 457-residue protein sequence, read N- to C-terminus: Acetylcholine receptor subunit alpha-1-B (457 aa).

The N-terminal stretch at methionine 1–glycine 20 is a signal peptide. Residues threonine 21–leucine 230 lie on the Extracellular side of the membrane. 2 disulfides stabilise this stretch: cysteine 148–cysteine 162 and cysteine 212–cysteine 213. An N-linked (GlcNAc...) asparagine glycan is attached at asparagine 161. The next 3 helical transmembrane spans lie at proline 231–leucine 255, methionine 263–valine 281, and tyrosine 297–isoleucine 316. Residues asparagine 317–histidine 428 are Cytoplasmic-facing. The chain crosses the membrane as a helical span at residues isoleucine 429–alanine 447.

The protein belongs to the ligand-gated ion channel (TC 1.A.9) family. Acetylcholine receptor (TC 1.A.9.1) subfamily. Alpha-1/CHRNA1 sub-subfamily. As to quaternary structure, one of the alpha chains that assemble within the acetylcholine receptor, a pentamer of two alpha chains, a beta, a delta, and a gamma or epsilon chains.

The protein localises to the postsynaptic cell membrane. It localises to the cell membrane. It carries out the reaction K(+)(in) = K(+)(out). The enzyme catalyses Na(+)(in) = Na(+)(out). Functionally, upon acetylcholine binding, the AChR responds by an extensive change in conformation that affects all subunits and leads to opening of an ion-conducting channel across the plasma membrane. This Xenopus laevis (African clawed frog) protein is Acetylcholine receptor subunit alpha-1-B (chrna1-b).